A 1228-amino-acid chain; its full sequence is DNA-directed RNA polymerase subunit beta (1228 aa).

This sequence belongs to the RNA polymerase beta chain family. In terms of assembly, the RNAP catalytic core consists of 2 alpha, 1 beta, 1 beta' and 1 omega subunit. When a sigma factor is associated with the core the holoenzyme is formed, which can initiate transcription.

The enzyme catalyses RNA(n) + a ribonucleoside 5'-triphosphate = RNA(n+1) + diphosphate. DNA-dependent RNA polymerase catalyzes the transcription of DNA into RNA using the four ribonucleoside triphosphates as substrates. This is DNA-directed RNA polymerase subunit beta from Leptospira biflexa serovar Patoc (strain Patoc 1 / Ames).